Reading from the N-terminus, the 998-residue chain is MEDAYARSVSEVLDFFGVDPTKGLSDSQVVHHSRLYGRNVLPEEKRTPFWKLVLKQFDDLLVKILIVAAIVSFVLALANGETGLTAFLEPFVILLILAANAAVGVITETNAEKALEELRAYQANIATVLRNGCFSILPATELVPGDIVEVTVGCKIPADLRMIEMSSNTFRVDQAILTGESCSVEKDVDCTLTTNAVYQDKKNILFSGTDVVAGRGRAVVIGVGSNTAMGSIHDSMLQTDDEATPLKKKLDEFGSFLAKVIAGICVLVWVVNIGHFSDPSHGGFFKGAIHYFKIAVALAVAAIPEGLPAVVTTCLALGTKKMARLNAIVRSLPSVETLGCTTVICSDKTGTLTTNMMSVSKICVVQSAEHGPMINEFTVSGTTYAPEGTVFDSNGMQLDLPAQSPCLHHLAMCSSLCNDSILQYNPDKDSYEKIGESTEVALRVLAEKVGLPGFDSMPSALNMLSKHERASYCNHYWENQFKKVYVLEFTRDRKMMSVLCSHKQMDVMFSKGAPESIIARCNKILCNGDGSVVPLTAAGRAELESRFYSFGDETLRCLALAFKTVPHGQQTISYDNENDLTFIGLVGMLDPPREEVRDAMLACMTAGIRVIVVTGDNKSTAESLCRKIGAFDNLVDFSGMSYTASEFERLPAVQQTLALRRMTLFSRVEPSHKRMLVEALQKQNEVVAMTGDGVNDAPALKKADIGIAMGSGTAVAKSASDMVLADDNFASIVAAVAEGRAIYNNTKQFIRYMISSNIGEVVCIFVAAVLGIPDTLAPVQLLWVNLVTDGLPATAIGFNKQDSDVMKAKPRKVGEAVVTGWLFFRYLVIGVYVGLATVAGFIWWFVYSDGGPKLTYSELMNFETCALRETTYPCSIFEDRHPSTVAMTVLVVVEMFNALNNLSENQSLLVITPRSNLWLVGSIILTMLLHVLILYVHPLAVLFSVTPLSWAEWTAVLYLSFPVIIIDELLKFLSRNTGMRFRFRLRKADLLPKDRRDK.

Over 1–48 (MEDAYARSVSEVLDFFGVDPTKGLSDSQVVHHSRLYGRNVLPEEKRTP) the chain is Cytoplasmic. The chain crosses the membrane as a helical span at residues 49–69 (FWKLVLKQFDDLLVKILIVAA). Residues 70–89 (IVSFVLALANGETGLTAFLE) are Lumenal-facing. Residues 90–109 (PFVILLILAANAAVGVITET) form a helical membrane-spanning segment. Residues 110 to 250 (NAEKALEELR…DEATPLKKKL (141 aa)) lie on the Cytoplasmic side of the membrane. Residues 251–270 (DEFGSFLAKVIAGICVLVWV) traverse the membrane as a helical segment. Over 271–291 (VNIGHFSDPSHGGFFKGAIHY) the chain is Lumenal. A helical membrane pass occupies residues 292 to 309 (FKIAVALAVAAIPEGLPA). Positions 300, 301, 303, and 305 each coordinate Ca(2+). Residues 310-746 (VVTTCLALGT…AEGRAIYNNT (437 aa)) lie on the Cytoplasmic side of the membrane. Residue Asp347 is the 4-aspartylphosphate intermediate of the active site. Mg(2+) is bound by residues Asp692 and Asp696. A helical transmembrane segment spans residues 747-766 (KQFIRYMISSNIGEVVCIFV). 2 residues coordinate Ca(2+): Asn757 and Glu760. Topologically, residues 767 to 776 (AAVLGIPDTL) are lumenal. The helical transmembrane segment at 777-797 (APVQLLWVNLVTDGLPATAIG) threads the bilayer. Positions 785, 788, and 789 each coordinate Ca(2+). At 798-817 (FNKQDSDVMKAKPRKVGEAV) the chain is on the cytoplasmic side. Residues 818 to 840 (VTGWLFFRYLVIGVYVGLATVAG) form a helical membrane-spanning segment. The Lumenal segment spans residues 841–883 (FIWWFVYSDGGPKLTYSELMNFETCALRETTYPCSIFEDRHPS). The chain crosses the membrane as a helical span at residues 884–903 (TVAMTVLVVVEMFNALNNLS). Glu894 lines the Ca(2+) pocket. At 904 to 916 (ENQSLLVITPRSN) the chain is on the cytoplasmic side. Residues 917 to 935 (LWLVGSIILTMLLHVLILY) form a helical membrane-spanning segment. Residues 936-950 (VHPLAVLFSVTPLSW) are Lumenal-facing. The chain crosses the membrane as a helical span at residues 951-971 (AEWTAVLYLSFPVIIIDELLK). The Cytoplasmic portion of the chain corresponds to 972–998 (FLSRNTGMRFRFRLRKADLLPKDRRDK).

The protein belongs to the cation transport ATPase (P-type) (TC 3.A.3) family. Type IIA subfamily. As to expression, expressed in root cap, in elongation and differentiation zones of roots, in vascular tissues of roots, leaves, floral pedicels and style, in leaves, including hydathodes and guard cells, in stamens, in petals, in sepals and in siliques.

Its subcellular location is the golgi apparatus membrane. It is found in the endosome membrane. The protein localises to the prevacuolar compartment membrane. It carries out the reaction Ca(2+)(in) + ATP + H2O = Ca(2+)(out) + ADP + phosphate + H(+). In terms of biological role, this magnesium-dependent enzyme catalyzes the hydrolysis of ATP coupled with the translocation of calcium from the cytosol to an endomembrane compartment. Involved in calcium-enhanced root growth, in tolerance to toxic levels of manganese and in secretory processes. Has a crucial role in manganese nutrition, but is not involved in transporting copper, iron or zinc. The polypeptide is Calcium-transporting ATPase 3, endoplasmic reticulum-type (Arabidopsis thaliana (Mouse-ear cress)).